The primary structure comprises 539 residues: 2-isopropylmalate synthase (539 aa).

Residues 8–269 (VLIFDTTLRD…YFNPFFGRPP (262 aa)) form the Pyruvate carboxyltransferase domain. The Mn(2+) site is built by Asp-17, His-208, His-210, and Asn-244. A regulatory domain region spans residues 408-539 (QLKLVQVSCG…DLAKVDKKGI (132 aa)).

The protein belongs to the alpha-IPM synthase/homocitrate synthase family. LeuA type 1 subfamily. Homodimer. Mn(2+) is required as a cofactor.

It localises to the cytoplasm. The catalysed reaction is 3-methyl-2-oxobutanoate + acetyl-CoA + H2O = (2S)-2-isopropylmalate + CoA + H(+). It functions in the pathway amino-acid biosynthesis; L-leucine biosynthesis; L-leucine from 3-methyl-2-oxobutanoate: step 1/4. In terms of biological role, catalyzes the condensation of the acetyl group of acetyl-CoA with 3-methyl-2-oxobutanoate (2-ketoisovalerate) to form 3-carboxy-3-hydroxy-4-methylpentanoate (2-isopropylmalate). The protein is 2-isopropylmalate synthase of Prochlorococcus marinus (strain NATL1A).